Here is a 315-residue protein sequence, read N- to C-terminus: beta-hydroxyaspartate dehydratase (315 aa).

Lysine 53 is modified (N6-(pyridoxal phosphate)lysine). Pyridoxal 5'-phosphate is bound by residues asparagine 80, 179–183, and threonine 303; that span reads GGGGM.

The cofactor is pyridoxal 5'-phosphate.

It carries out the reaction (3S)-3-hydroxy-D-aspartate = iminosuccinate + H2O. Its function is as follows. Catalyzes the dehydration of (2R,3S)-beta-hydroxyaspartate ((3S)-3-hydroxy-D-aspartate) into iminosuccinate. Is essential for the growth of P.denitrificans in the presence of glycolate and glyoxylate since it functions in glyoxylate assimilation via the beta-hydroxyaspartate cycle (BHAC). This is beta-hydroxyaspartate dehydratase from Paracoccus denitrificans (strain Pd 1222).